The chain runs to 245 residues: Spore membrane assembly protein 1 (245 aa).

In terms of biological role, involved in spore and ascus formation. Required for the efficient assembly of the precursors of the prospore membrane to a continuous prospore membrane. This chain is Spore membrane assembly protein 1 (SMA1), found in Saccharomyces cerevisiae (strain ATCC 204508 / S288c) (Baker's yeast).